Consider the following 545-residue polypeptide: CTP synthase (545 aa).

The tract at residues 1-266 (MKTNYIFVTG…DDYICKRFSL (266 aa)) is amidoligase domain. Position 14 (Ser-14) interacts with CTP. Ser-14 is a UTP binding site. Residues 15 to 20 (SLGKGI) and Asp-72 each bind ATP. Residues Asp-72 and Glu-140 each contribute to the Mg(2+) site. CTP contacts are provided by residues 147-149 (DIE), 187-192 (KTKPTQ), and Lys-223. Residues 187–192 (KTKPTQ) and Lys-223 each bind UTP. 239–241 (KDV) is an ATP binding site. The 252-residue stretch at 291 to 542 (TIGMVGKYVE…VKAAFDYQKG (252 aa)) folds into the Glutamine amidotransferase type-1 domain. L-glutamine is bound at residue Gly-352. Cys-379 (nucleophile; for glutamine hydrolysis) is an active-site residue. L-glutamine contacts are provided by residues 380–383 (LGMQ), Glu-403, and Arg-470. Catalysis depends on residues His-515 and Glu-517.

It belongs to the CTP synthase family. Homotetramer.

The catalysed reaction is UTP + L-glutamine + ATP + H2O = CTP + L-glutamate + ADP + phosphate + 2 H(+). The enzyme catalyses L-glutamine + H2O = L-glutamate + NH4(+). It catalyses the reaction UTP + NH4(+) + ATP = CTP + ADP + phosphate + 2 H(+). It participates in pyrimidine metabolism; CTP biosynthesis via de novo pathway; CTP from UDP: step 2/2. Its activity is regulated as follows. Allosterically activated by GTP, when glutamine is the substrate; GTP has no effect on the reaction when ammonia is the substrate. The allosteric effector GTP functions by stabilizing the protein conformation that binds the tetrahedral intermediate(s) formed during glutamine hydrolysis. Inhibited by the product CTP, via allosteric rather than competitive inhibition. Catalyzes the ATP-dependent amination of UTP to CTP with either L-glutamine or ammonia as the source of nitrogen. Regulates intracellular CTP levels through interactions with the four ribonucleotide triphosphates. The chain is CTP synthase from Proteus mirabilis (strain HI4320).